A 31-amino-acid polypeptide reads, in one-letter code: MPTITSYFGFLLAALTITSALLIGLSKIRLI.

A helical transmembrane segment spans residues 4–24; that stretch reads ITSYFGFLLAALTITSALLIG.

It belongs to the PetL family. In terms of assembly, the 4 large subunits of the cytochrome b6-f complex are cytochrome b6, subunit IV (17 kDa polypeptide, PetD), cytochrome f and the Rieske protein, while the 4 small subunits are PetG, PetL, PetM and PetN. The complex functions as a dimer.

It is found in the plastid. The protein localises to the chloroplast thylakoid membrane. Component of the cytochrome b6-f complex, which mediates electron transfer between photosystem II (PSII) and photosystem I (PSI), cyclic electron flow around PSI, and state transitions. PetL is important for photoautotrophic growth as well as for electron transfer efficiency and stability of the cytochrome b6-f complex. This chain is Cytochrome b6-f complex subunit 6, found in Piper cenocladum (Ant piper).